Consider the following 313-residue polypeptide: tRNA dimethylallyltransferase (313 aa).

Residue 11–18 participates in ATP binding; the sequence is GPTASGKT. 13–18 serves as a coordination point for substrate; the sequence is TASGKT. Interaction with substrate tRNA stretches follow at residues 36–39, 160–164, and 241–246; these read DSAL, QRINR, and RCVGYR.

Belongs to the IPP transferase family. Monomer. Mg(2+) serves as cofactor.

It catalyses the reaction adenosine(37) in tRNA + dimethylallyl diphosphate = N(6)-dimethylallyladenosine(37) in tRNA + diphosphate. Its function is as follows. Catalyzes the transfer of a dimethylallyl group onto the adenine at position 37 in tRNAs that read codons beginning with uridine, leading to the formation of N6-(dimethylallyl)adenosine (i(6)A). This Haemophilus ducreyi (strain 35000HP / ATCC 700724) protein is tRNA dimethylallyltransferase.